We begin with the raw amino-acid sequence, 307 residues long: 4-hydroxybenzoate octaprenyltransferase (307 aa).

7 helical membrane-spanning segments follow: residues 27–47 (AGWLLLLWPTLGALWLAAGGF), 50–70 (WHLLAVFTLGTVLMRSAGCCI), 101–121 (LAVGAVLALAAFALVLTTNAL), 142–162 (CVAMPQAVLGVAFSFGIPMAF), 179–199 (AAVPWWAWGLLIGNLFWVLAY), 239–259 (LLAWGAIGFWQGLGVAFAAGL), and 285–305 (FRLNHWVGFAVFAGIVVDLGW).

It belongs to the UbiA prenyltransferase family. Requires Mg(2+) as cofactor.

The protein localises to the cell inner membrane. The enzyme catalyses all-trans-octaprenyl diphosphate + 4-hydroxybenzoate = 4-hydroxy-3-(all-trans-octaprenyl)benzoate + diphosphate. Its pathway is cofactor biosynthesis; ubiquinone biosynthesis. In terms of biological role, catalyzes the prenylation of para-hydroxybenzoate (PHB) with an all-trans polyprenyl group. Mediates the second step in the final reaction sequence of ubiquinone-8 (UQ-8) biosynthesis, which is the condensation of the polyisoprenoid side chain with PHB, generating the first membrane-bound Q intermediate 3-octaprenyl-4-hydroxybenzoate. In Methylibium petroleiphilum (strain ATCC BAA-1232 / LMG 22953 / PM1), this protein is 4-hydroxybenzoate octaprenyltransferase.